Here is a 67-residue protein sequence, read N- to C-terminus: Probable tautomerase K2 (67 aa).

The Proton acceptor; via imino nitrogen role is filled by proline 2.

Belongs to the 4-oxalocrotonate tautomerase family.

This Dickeya dadantii (strain 3937) (Erwinia chrysanthemi (strain 3937)) protein is Probable tautomerase K2.